An 838-amino-acid chain; its full sequence is Urease (838 aa).

The Urease domain maps to 402-838 (GGFDTHIHFI…LPLTQDYFVY (437 aa)). The Ni(2+) site is built by H407, H409, and K490. An N6-carboxylysine modification is found at K490. H492 is a substrate binding site. Residues H519 and H545 each coordinate Ni(2+). H593 (proton donor) is an active-site residue. D633 provides a ligand contact to Ni(2+).

In the C-terminal section; belongs to the metallo-dependent hydrolases superfamily. Urease alpha subunit family. In terms of assembly, homohexamer. Ni cation serves as cofactor. Post-translationally, carboxylation allows a single lysine to coordinate two nickel ions.

The catalysed reaction is urea + 2 H2O + H(+) = hydrogencarbonate + 2 NH4(+). The protein operates within nitrogen metabolism; urea degradation; CO(2) and NH(3) from urea (urease route): step 1/1. The sequence is that of Urease (ure1) from Aspergillus fumigatus (strain ATCC MYA-4609 / CBS 101355 / FGSC A1100 / Af293) (Neosartorya fumigata).